We begin with the raw amino-acid sequence, 448 residues long: MRVSPAATLSVSLTTPLPITLTKARFSGEPLRLKQYVLSNQICSRPKHLLSEFKPTRRWTFSCKCRNRGRNGYAKFDDEGEDFIVVNFYRFVSIGDPEAEIEKHLSFLKDLNIRGRIYLNEQGINAQYSGPSKDALAYVEWLKGDDRFSDLLVQMSPAMNRHAFPKLKLQNKPSLVQYEGGISHLPLLDPPMRAKPLEPSEWKRKLKDLTDDDEASPSNSGKSYILLDVRNGYEWDVGHFRGAHRPEVDCFRNTSFGLSDEKEAPSDPLINVDKEKTDILMYCTGGIRCDVYSTVLRQRGFKNLYTLKGGVSHYLKEEGTAEWVGNLFVFDSRLSLPPAAYNDNVVDKAVGDNVVDEAGRTPQTPVDTSFARCYLCNSQVQELRHRNCANLDCNRLFLCCAECVVDLKGCCCSDCISAPRLRPVLHGVKRYEKWHVYRDSEEQNAPLV.

The transit peptide at 1-23 (MRVSPAATLSVSLTTPLPITLTK) directs the protein to the chloroplast. Residues 220–323 (SGKSYILLDV…YLKEEGTAEW (104 aa)) form the Rhodanese domain. Cysteine 283 (cysteine persulfide intermediate) is an active-site residue.

It localises to the plastid. The protein resides in the chloroplast. This is Rhodanese-like domain-containing protein 8, chloroplastic (STR8) from Arabidopsis thaliana (Mouse-ear cress).